We begin with the raw amino-acid sequence, 411 residues long: Arginine deiminase (411 aa).

C401 (amidino-cysteine intermediate) is an active-site residue.

It belongs to the arginine deiminase family.

It is found in the cytoplasm. It catalyses the reaction L-arginine + H2O = L-citrulline + NH4(+). The protein operates within amino-acid degradation; L-arginine degradation via ADI pathway; carbamoyl phosphate from L-arginine: step 1/2. This chain is Arginine deiminase, found in Staphylococcus aureus (strain JH9).